The sequence spans 149 residues: UPF0178 protein VFMJ11_0615 (149 aa).

The protein belongs to the UPF0178 family.

This chain is UPF0178 protein VFMJ11_0615, found in Aliivibrio fischeri (strain MJ11) (Vibrio fischeri).